The sequence spans 537 residues: Asparagine-rich protein (537 aa).

Disordered regions lie at residues 1-22 (YNNN…QNTN), 187-254 (NMNI…NNNF), 336-372 (YNNN…YGYD), 399-479 (LNNN…DDWG), and 509-528 (DLSK…MKKD). 2 stretches are compositionally biased toward low complexity: residues 336 to 347 (YNNNESNTANPN) and 399 to 469 (LNNN…NQNN). Acidic residues predominate over residues 470–479 (NEDEDDDDWG). The segment covering 509-518 (DLSKKGNDGK) has biased composition (basic and acidic residues).

In Plasmodium falciparum, this protein is Asparagine-rich protein.